A 96-amino-acid polypeptide reads, in one-letter code: Co-chaperonin GroES (96 aa).

Belongs to the GroES chaperonin family. Heptamer of 7 subunits arranged in a ring. Interacts with the chaperonin GroEL.

It localises to the cytoplasm. Together with the chaperonin GroEL, plays an essential role in assisting protein folding. The GroEL-GroES system forms a nano-cage that allows encapsulation of the non-native substrate proteins and provides a physical environment optimized to promote and accelerate protein folding. GroES binds to the apical surface of the GroEL ring, thereby capping the opening of the GroEL channel. This chain is Co-chaperonin GroES, found in Caulobacter sp. (strain K31).